The following is a 393-amino-acid chain: Elongation factor Tu (393 aa).

The 194-residue stretch at 10–203 (KPHVNIGTIG…AVDSYIPQPV (194 aa)) folds into the tr-type G domain. Residues 19 to 26 (GHVDHGKT) form a G1 region. 19–26 (GHVDHGKT) is a GTP binding site. Threonine 26 lines the Mg(2+) pocket. A G2 region spans residues 60-64 (GITIS). The tract at residues 81-84 (DCPG) is G3. Residues 81–85 (DCPGH) and 136–139 (NKVD) each bind GTP. Residues 136-139 (NKVD) form a G4 region. Residues 173–175 (SAL) form a G5 region.

It belongs to the TRAFAC class translation factor GTPase superfamily. Classic translation factor GTPase family. EF-Tu/EF-1A subfamily. In terms of assembly, monomer.

It is found in the cytoplasm. It carries out the reaction GTP + H2O = GDP + phosphate + H(+). Functionally, GTP hydrolase that promotes the GTP-dependent binding of aminoacyl-tRNA to the A-site of ribosomes during protein biosynthesis. This is Elongation factor Tu from Chlorobaculum tepidum (strain ATCC 49652 / DSM 12025 / NBRC 103806 / TLS) (Chlorobium tepidum).